A 178-amino-acid polypeptide reads, in one-letter code: Fimbrial adapter PapK (178 aa).

A signal peptide spans Met1–Ala21.

The protein resides in the secreted. The protein localises to the fimbrium. Functionally, adapter that links the pilus rod to the base of the tip fibrillum. Regulates the length of the tip fibrillum and joins it to the pilus rod. Pili are polar filaments radiating from the surface of the bacterium to a length of 0.5-1.5 micrometers and numbering 100-300 per cell, and enable bacteria to colonize the epithelium of specific host organs. The chain is Fimbrial adapter PapK (papK) from Escherichia coli O6:H1 (strain CFT073 / ATCC 700928 / UPEC).